We begin with the raw amino-acid sequence, 649 residues long: Replication factor C small subunit (649 aa).

Position 55–385 (55–385) interacts with ATP; sequence GPAGVGKCVT…GCIPTVMHNT (331 aa).

This sequence belongs to the activator 1 small subunits family. RfcS subfamily. As to quaternary structure, heteromultimer composed of small subunits (RfcS) and large subunits (RfcL). This protein undergoes a protein self splicing that involves a post-translational excision of the intervening region (intein) followed by peptide ligation.

In terms of biological role, part of the RFC clamp loader complex which loads the PCNA sliding clamp onto DNA. The sequence is that of Replication factor C small subunit (rfcS) from Haloquadratum walsbyi (strain DSM 16790 / HBSQ001).